The sequence spans 375 residues: Growth/differentiation factor 8 (375 aa).

Positions 1–23 (MQKLQLCVYIYLFMLIVAGPVDL) are cleaved as a signal peptide. A propeptide spanning residues 24-266 (NENSEQKENV…VTDTPKRSRR (243 aa)) is cleaved from the precursor. N-linked (GlcNAc...) asparagine glycosylation is present at Asn71. Cystine bridges form between Cys272–Cys282, Cys281–Cys340, Cys309–Cys372, and Cys313–Cys374.

The protein belongs to the TGF-beta family. As to quaternary structure, homodimer; disulfide-linked. Interacts with WFIKKN2, leading to inhibit its activity. Interacts with FSTL3. Synthesized as large precursor molecule that undergoes proteolytic cleavage to generate an N-terminal propeptide and a disulfide linked C-terminal dimer, which is the biologically active molecule. The circulating form consists of a latent complex of the C-terminal dimer and other proteins, including its propeptide, which maintain the C-terminal dimer in a latent, inactive state. Ligand activation requires additional cleavage of the prodomain by a tolloid-like metalloproteinase.

The protein localises to the secreted. Its function is as follows. Acts specifically as a negative regulator of skeletal muscle growth. This chain is Growth/differentiation factor 8 (MSTN), found in Pan paniscus (Pygmy chimpanzee).